The sequence spans 334 residues: Phenylalanine--tRNA ligase alpha subunit (334 aa).

A Mg(2+)-binding site is contributed by E249.

Belongs to the class-II aminoacyl-tRNA synthetase family. Phe-tRNA synthetase alpha subunit type 1 subfamily. In terms of assembly, tetramer of two alpha and two beta subunits. The cofactor is Mg(2+).

It localises to the cytoplasm. It catalyses the reaction tRNA(Phe) + L-phenylalanine + ATP = L-phenylalanyl-tRNA(Phe) + AMP + diphosphate + H(+). This is Phenylalanine--tRNA ligase alpha subunit from Desulfatibacillum aliphaticivorans.